Here is a 388-residue protein sequence, read N- to C-terminus: Arginine biosynthesis bifunctional protein ArgJ (388 aa).

Substrate is bound by residues threonine 150, lysine 172, threonine 183, glutamate 263, asparagine 383, and threonine 388. Catalysis depends on threonine 183, which acts as the Nucleophile.

This sequence belongs to the ArgJ family. In terms of assembly, heterotetramer of two alpha and two beta chains.

It localises to the cytoplasm. The catalysed reaction is N(2)-acetyl-L-ornithine + L-glutamate = N-acetyl-L-glutamate + L-ornithine. It catalyses the reaction L-glutamate + acetyl-CoA = N-acetyl-L-glutamate + CoA + H(+). It functions in the pathway amino-acid biosynthesis; L-arginine biosynthesis; L-ornithine and N-acetyl-L-glutamate from L-glutamate and N(2)-acetyl-L-ornithine (cyclic): step 1/1. The protein operates within amino-acid biosynthesis; L-arginine biosynthesis; N(2)-acetyl-L-ornithine from L-glutamate: step 1/4. Catalyzes two activities which are involved in the cyclic version of arginine biosynthesis: the synthesis of N-acetylglutamate from glutamate and acetyl-CoA as the acetyl donor, and of ornithine by transacetylation between N(2)-acetylornithine and glutamate. The sequence is that of Arginine biosynthesis bifunctional protein ArgJ from Corynebacterium efficiens (strain DSM 44549 / YS-314 / AJ 12310 / JCM 11189 / NBRC 100395).